The sequence spans 225 residues: NAD(P)H-quinone oxidoreductase subunit K, chloroplastic (225 aa).

4 residues coordinate [4Fe-4S] cluster: C43, C44, C108, and C139.

Belongs to the complex I 20 kDa subunit family. In terms of assembly, NDH is composed of at least 16 different subunits, 5 of which are encoded in the nucleus. The cofactor is [4Fe-4S] cluster.

The protein localises to the plastid. It localises to the chloroplast thylakoid membrane. The enzyme catalyses a plastoquinone + NADH + (n+1) H(+)(in) = a plastoquinol + NAD(+) + n H(+)(out). The catalysed reaction is a plastoquinone + NADPH + (n+1) H(+)(in) = a plastoquinol + NADP(+) + n H(+)(out). NDH shuttles electrons from NAD(P)H:plastoquinone, via FMN and iron-sulfur (Fe-S) centers, to quinones in the photosynthetic chain and possibly in a chloroplast respiratory chain. The immediate electron acceptor for the enzyme in this species is believed to be plastoquinone. Couples the redox reaction to proton translocation, and thus conserves the redox energy in a proton gradient. This is NAD(P)H-quinone oxidoreductase subunit K, chloroplastic from Crucihimalaya wallichii (Rock-cress).